The following is a 115-amino-acid chain: Large ribosomal subunit protein bL19 (115 aa).

This sequence belongs to the bacterial ribosomal protein bL19 family.

Functionally, this protein is located at the 30S-50S ribosomal subunit interface and may play a role in the structure and function of the aminoacyl-tRNA binding site. This chain is Large ribosomal subunit protein bL19, found in Shouchella clausii (strain KSM-K16) (Alkalihalobacillus clausii).